A 214-amino-acid polypeptide reads, in one-letter code: Urease accessory protein UreE (214 aa).

Residues 163 to 214 are disordered; it reads NAEPSGVDHSHEATDSGHGYGEDHDHDHSHDHNHDHDHNHDHDHSHSHDSHE. Residues 168-214 are compositionally biased toward basic and acidic residues; the sequence is GVDHSHEATDSGHGYGEDHDHDHSHDHNHDHDHNHDHDHSHSHDSHE.

Belongs to the UreE family.

Its subcellular location is the cytoplasm. In terms of biological role, involved in urease metallocenter assembly. Binds nickel. Probably functions as a nickel donor during metallocenter assembly. The sequence is that of Urease accessory protein UreE from Natronomonas pharaonis (strain ATCC 35678 / DSM 2160 / CIP 103997 / JCM 8858 / NBRC 14720 / NCIMB 2260 / Gabara) (Halobacterium pharaonis).